The following is a 296-amino-acid chain: Nucleotide-binding protein Rmet_0297 (296 aa).

Glycine 8–serine 15 contributes to the ATP binding site. Residue aspartate 57–serine 60 participates in GTP binding.

This sequence belongs to the RapZ-like family.

In terms of biological role, displays ATPase and GTPase activities. This is Nucleotide-binding protein Rmet_0297 from Cupriavidus metallidurans (strain ATCC 43123 / DSM 2839 / NBRC 102507 / CH34) (Ralstonia metallidurans).